Here is a 460-residue protein sequence, read N- to C-terminus: ATP synthase subunit beta (460 aa).

150-157 (GGAGVGKT) serves as a coordination point for ATP.

Belongs to the ATPase alpha/beta chains family. F-type ATPases have 2 components, CF(1) - the catalytic core - and CF(0) - the membrane proton channel. CF(1) has five subunits: alpha(3), beta(3), gamma(1), delta(1), epsilon(1). CF(0) has three main subunits: a(1), b(2) and c(9-12). The alpha and beta chains form an alternating ring which encloses part of the gamma chain. CF(1) is attached to CF(0) by a central stalk formed by the gamma and epsilon chains, while a peripheral stalk is formed by the delta and b chains.

The protein resides in the cell inner membrane. It carries out the reaction ATP + H2O + 4 H(+)(in) = ADP + phosphate + 5 H(+)(out). Functionally, produces ATP from ADP in the presence of a proton gradient across the membrane. The catalytic sites are hosted primarily by the beta subunits. The sequence is that of ATP synthase subunit beta from Escherichia coli (strain SMS-3-5 / SECEC).